A 354-amino-acid polypeptide reads, in one-letter code: Uroporphyrinogen decarboxylase (354 aa).

Substrate contacts are provided by residues 27 to 31 (RQAGR), Asp77, Tyr154, Thr209, and His327.

It belongs to the uroporphyrinogen decarboxylase family. Homodimer.

Its subcellular location is the cytoplasm. It catalyses the reaction uroporphyrinogen III + 4 H(+) = coproporphyrinogen III + 4 CO2. The protein operates within porphyrin-containing compound metabolism; protoporphyrin-IX biosynthesis; coproporphyrinogen-III from 5-aminolevulinate: step 4/4. Functionally, catalyzes the decarboxylation of four acetate groups of uroporphyrinogen-III to yield coproporphyrinogen-III. This chain is Uroporphyrinogen decarboxylase, found in Salmonella paratyphi A (strain ATCC 9150 / SARB42).